The primary structure comprises 447 residues: Phosphoglucosamine mutase (447 aa).

The active-site Phosphoserine intermediate is the serine 103. Mg(2+) contacts are provided by serine 103, aspartate 242, aspartate 244, and aspartate 246. Serine 103 is modified (phosphoserine).

It belongs to the phosphohexose mutase family. Mg(2+) serves as cofactor. In terms of processing, activated by phosphorylation.

It carries out the reaction alpha-D-glucosamine 1-phosphate = D-glucosamine 6-phosphate. Its function is as follows. Catalyzes the conversion of glucosamine-6-phosphate to glucosamine-1-phosphate. The sequence is that of Phosphoglucosamine mutase from Marinobacter nauticus (strain ATCC 700491 / DSM 11845 / VT8) (Marinobacter aquaeolei).